The primary structure comprises 377 residues: Chaperone protein DnaJ (377 aa).

Residues 5 to 70 form the J domain; sequence DYYELLGLQK…EKKAKYDQFG (66 aa). The CR-type zinc finger occupies 137–219; that stretch reads GVEKEISVTR…CRGKGSVRKT (83 aa). 8 residues coordinate Zn(2+): C150, C153, C167, C170, C193, C196, C207, and C210. CXXCXGXG motif repeat units lie at residues 150–157, 167–174, 193–200, and 207–214; these read CEHCHGSG, CPTCSGSG, CDTCRGTG, and CSECRGKG.

Belongs to the DnaJ family. In terms of assembly, homodimer. Requires Zn(2+) as cofactor.

It localises to the cytoplasm. Its function is as follows. Participates actively in the response to hyperosmotic and heat shock by preventing the aggregation of stress-denatured proteins and by disaggregating proteins, also in an autonomous, DnaK-independent fashion. Unfolded proteins bind initially to DnaJ; upon interaction with the DnaJ-bound protein, DnaK hydrolyzes its bound ATP, resulting in the formation of a stable complex. GrpE releases ADP from DnaK; ATP binding to DnaK triggers the release of the substrate protein, thus completing the reaction cycle. Several rounds of ATP-dependent interactions between DnaJ, DnaK and GrpE are required for fully efficient folding. Also involved, together with DnaK and GrpE, in the DNA replication of plasmids through activation of initiation proteins. In Clostridium beijerinckii (strain ATCC 51743 / NCIMB 8052) (Clostridium acetobutylicum), this protein is Chaperone protein DnaJ.